A 368-amino-acid polypeptide reads, in one-letter code: Tetraacyldisaccharide 4'-kinase (368 aa).

Residue 66 to 73 coordinates ATP; sequence TVGGTGKT.

Belongs to the LpxK family.

The catalysed reaction is a lipid A disaccharide + ATP = a lipid IVA + ADP + H(+). It participates in glycolipid biosynthesis; lipid IV(A) biosynthesis; lipid IV(A) from (3R)-3-hydroxytetradecanoyl-[acyl-carrier-protein] and UDP-N-acetyl-alpha-D-glucosamine: step 6/6. In terms of biological role, transfers the gamma-phosphate of ATP to the 4'-position of a tetraacyldisaccharide 1-phosphate intermediate (termed DS-1-P) to form tetraacyldisaccharide 1,4'-bis-phosphate (lipid IVA). This Desulfatibacillum aliphaticivorans protein is Tetraacyldisaccharide 4'-kinase.